The following is a 79-amino-acid chain: Sec-independent protein translocase protein TatA (79 aa).

A helical transmembrane segment spans residues 1–21; the sequence is MFSGISIWQLLILLAIVVLLF. 2 stretches are compositionally biased toward basic and acidic residues: residues 44 to 58 and 66 to 79; these read MKDG…RLAD and QDAE…KDKA. The segment at 44-79 is disordered; it reads MKDGEDEQDHKRLADDDQPQNKQDAEQKAEQEKDKA.

The protein belongs to the TatA/E family. The Tat system comprises two distinct complexes: a TatABC complex, containing multiple copies of TatA, TatB and TatC subunits, and a separate TatA complex, containing only TatA subunits. Substrates initially bind to the TatABC complex, which probably triggers association of the separate TatA complex to form the active translocon.

The protein resides in the cell inner membrane. Its function is as follows. Part of the twin-arginine translocation (Tat) system that transports large folded proteins containing a characteristic twin-arginine motif in their signal peptide across membranes. TatA could form the protein-conducting channel of the Tat system. The chain is Sec-independent protein translocase protein TatA from Alcanivorax borkumensis (strain ATCC 700651 / DSM 11573 / NCIMB 13689 / SK2).